The chain runs to 701 residues: Capsid protein VP1 (701 aa).

This sequence belongs to the caliciviridae capsid protein family. Homodimer. Homomultimer. Interacts with the minor capsid protein VP2. May bind to VP3 and Vpg proteins. Cleaved by the viral protease to produce mature capsid protein.

It is found in the virion. The protein resides in the host cytoplasm. Functionally, capsid protein self assembles to form an icosahedral capsid with a T=3 symmetry, about 38 nm in diameter, and consisting of 180 capsid proteins. A smaller form of capsid with a diameter of 23 nm might be capsid proteins assembled as icosahedron with T=1 symmetry. The capsid encapsulates the genomic RNA and is decorated with VP2 proteins. The polypeptide is Capsid protein VP1 (Vesicular exanthema of swine virus serotype A48 (isolate Swine/United States/A48/1948) (VESV)).